The sequence spans 545 residues: Protein disulfide isomerase-like 1-3 (545 aa).

Over residues 1–16 (MWPRAPATPPPPPWPS) the composition is skewed to pro residues. The interval 1–24 (MWPRAPATPPPPPWPSKPSAASRS) is disordered. The Thioredoxin 1 domain occupies 55 to 189 (ASSTAFAAAF…IVAYLKRQAG (135 aa)). An N-linked (GlcNAc...) asparagine glycan is attached at Asn-87. Active-site nucleophile residues include Cys-107 and Cys-110. Cys-107 and Cys-110 are joined by a disulfide. N-linked (GlcNAc...) asparagine glycosylation occurs at Asn-349. The region spanning 403 to 545 (FTEGTLAPHV…TTTESVKDEL (143 aa)) is the Thioredoxin 2 domain. Residues Cys-453 and Cys-456 each act as nucleophile in the active site. Cys-453 and Cys-456 are oxidised to a cystine. Positions 542–545 (KDEL) match the Prevents secretion from ER motif.

Belongs to the protein disulfide isomerase family.

It localises to the endoplasmic reticulum lumen. It catalyses the reaction Catalyzes the rearrangement of -S-S- bonds in proteins.. Its function is as follows. Acts as a protein-folding catalyst that interacts with nascent polypeptides to catalyze the formation, isomerization, and reduction or oxidation of disulfide bonds. May play a role in storage protein biogenesis. The chain is Protein disulfide isomerase-like 1-3 (PDIL1-3) from Oryza sativa subsp. japonica (Rice).